A 1321-amino-acid chain; its full sequence is Serine/threonine-protein kinase SIK3 (1321 aa).

The disordered stretch occupies residues 1–59; the sequence is MAAAAASGAGGAAGAGTGGAGPAGRLLPPPAPGSPAAPAAVSPAAGQPRPPAPASRGPM. Positions 8–22 are enriched in gly residues; that stretch reads GAGGAAGAGTGGAGP. Low complexity predominate over residues 36–47; that stretch reads AAPAAVSPAAGQ. A Protein kinase domain is found at 66–317; the sequence is YEIDRTIGKG…MEQICKHKWM (252 aa). The residue at position 71 (T71) is a Phosphothreonine. ATP contacts are provided by residues 72–80 and K95; that span reads IGKGNFAVV. A Phosphothreonine modification is found at E113. D188 (proton acceptor) is an active-site residue. Position 221 is a phosphothreonine; by LKB1 (T221). One can recognise a UBA domain in the interval 344 to 384; sequence PLNEDVLLAMEDMGLDKEQTLQSLRSDAYDHYSAIYSLLCD. T469 carries the post-translational modification Phosphothreonine. 3 positions are modified to phosphoserine: S551, S591, and S592. Positions 585 to 614 are disordered; the sequence is TPVDEESSDGEPDQEAVQSSTYKDSNTLHL. Over residues 587-598 the composition is skewed to acidic residues; it reads VDEESSDGEPDQ. The span at 600 to 613 shows a compositional bias: polar residues; the sequence is AVQSSTYKDSNTLH. Residues S626 and S647 each carry the phosphoserine modification. A disordered region spans residues 727-772; the sequence is IQPSSPPPNHPNNHLFRQPSNSPPPMSSAMIQPHGAASSSQFQGLP. Over residues 763–772 the composition is skewed to polar residues; it reads ASSSQFQGLP. At S866 the chain carries Phosphoserine. A disordered region spans residues 894–945; the sequence is LFSDQSRGSPSSYSPSTGVGFSPTQALKVPPLDQFPTFPPSAHQQPPHYTTS. Positions 896 to 909 are enriched in low complexity; sequence SDQSRGSPSSYSPS. A compositionally biased stretch (polar residues) spans 935 to 945; it reads AHQQPPHYTTS. S978 bears the Phosphoserine mark. An Omega-N-methylarginine modification is found at R986. The span at 1256–1265 shows a compositional bias: polar residues; sequence SLMGSQQFQD. The tract at residues 1256 to 1289 is disordered; sequence SLMGSQQFQDGENEECGASLGGHEHPDLSDGSQH.

The protein belongs to the protein kinase superfamily. CAMK Ser/Thr protein kinase family. SNF1 subfamily. As to quaternary structure, binds to and is activated by YWHAZ when phosphorylated on Thr-221. Interacts with 14-3-3 proteins. Interacts with HDAC4; this interaction leads to HDAC4 retention in the cytoplasm. Interacts with DEPTOR, MLST8/GbetaL, RICTOR and RPTOR. Mg(2+) is required as a cofactor. Post-translationally, phosphorylated at Thr-221 by STK11/LKB1 in complex with STE20-related adapter-alpha (STRADA) pseudo kinase and CAB39. Phosphorylation at Thr-221 is inhibited in response to PTHLH/PTHrP. Phosphorylated at Thr-469 and Ser-551 in response to cAMP signaling. Expressed in chondrocytes.

The protein localises to the cytoplasm. The catalysed reaction is L-seryl-[protein] + ATP = O-phospho-L-seryl-[protein] + ADP + H(+). It catalyses the reaction L-threonyl-[protein] + ATP = O-phospho-L-threonyl-[protein] + ADP + H(+). Its activity is regulated as follows. Activated by phosphorylation on Thr-221. Its function is as follows. Positive regulator of mTOR signaling that functions by triggering the degradation of DEPTOR, an mTOR inhibitor. Involved in the dynamic regulation of mTOR signaling in chondrocyte differentiation during skeletogenesis. Negatively regulates cAMP signaling pathway possibly by acting on CRTC2/TORC2 and CRTC3/TORC3. Prevents HDAC4 translocation to the nucleus. The protein is Serine/threonine-protein kinase SIK3 of Homo sapiens (Human).